The sequence spans 628 residues: Kelch-like protein diablo (628 aa).

The disordered stretch occupies residues 1-56 (MGDLPGSTGGGSGPAAAGNASGNASSAGNTGLGVAGTTGVDRPPSPARLSHTSEKH). Residues 14–29 (PAAAGNASGNASSAGN) are compositionally biased toward low complexity. The region spanning 74 to 141 (CDVVLNVGGR…CYTAHIIVEE (68 aa)) is the BTB domain. The BACK domain maps to 176-278 (CLGIRAFADT…SPKFLVGTVG (103 aa)). 6 Kelch repeats span residues 325–371 (VLFA…VLND), 373–419 (LYAV…VLDG), 420–466 (FLYA…VLGG), 468–513 (LYAI…VFNN), 515–560 (IYAV…VVNG), and 561–607 (QLYA…VMRA).

It participates in protein modification; protein ubiquitination. Functionally, probable substrate-specific adapter of an E3 ubiquitin-protein ligase complex which mediates the ubiquitination and subsequent proteasomal degradation of target proteins. May have a role in synapse differentiation and growth. The polypeptide is Kelch-like protein diablo (Drosophila pseudoobscura pseudoobscura (Fruit fly)).